Consider the following 890-residue polypeptide: MKILKSLVLLVLFMAMPAKADDAFSWMSTSFGGLKSLFGCLEVPEFTSFKEGNIGISLSTAGTWQSTGNSVEKGKLLKINWSTSGITPEPRKYLVLYRIDPRFSTPQVFIKTYNYSKLQFEALGFPRFVTDNNSATPGAIPPDKDLDALSFTKMSDSVKYFNYSNGNSRIEVKAGDVVNISLVGKDNFFSPNTLDNILTQELDSSIFAASALYTQSNLGNFDNRIIYSSAKEVCDLIDASRDPDKPSGCSGTGSATKYKSINSNEALVGKPMITRAVQNFMGLINSCPANAGINTSPACYYDQGRGMIIKVGGQVIKERDQSFVNSGSTQSSFIYYQATSGGTMDFTSDWQVNNMFSNSVLMSDWSRNFSNYANFVDYINKNDWSANFLYFGRYSMIVEIGNGANSINPGDQQNISLEYLITSDGTLPDPSVRGTPVDYNFAADAPQDGYLWLRVVNPNSNIQGVVSVNYANYTGTTWFSDIIYNGAIKPITDQFRTFSQNFYIKLVKNSAVQNIAKAALTLYVTIFGLMFVAGALKLTAVEVITRICKIAIVAFLIREESWSFFNTYFFSAFTNGIDFFVTNVVGATSSRANIFGFIDPIFDKYTNGRIWGLLFIELLQIHNGLAFIAIITIYSLITYFRAILEVIIGYVIAFIGLTVMISLAPFFIILMLFEKTKSLFDNWISTLLSYVVQPTILLIFFLLIDQVLSEQLLKVVVRACWDTLIPIKIGLDLTNLGIPINFSFTLPFLPGIPFYVPDVPEISSSNILTNKANTFLVLFTTALLFYSYCLMSYGLVTFVNIVVGMLTNVTPARISGNYQERSDPVGAVMQDIGSVTKPIKKAAMAPARVFKDKIIDQNYKARKPEGGEHTNKFLAERNDVPKKEEGERKE.

Positions 1–20 (MKILKSLVLLVLFMAMPAKA) are cleaved as a signal peptide. The next 6 helical transmembrane spans lie at 518-538 (AALT…ALKL), 567-587 (TYFF…VVGA), 613-633 (LLFI…IITI), 651-671 (VIAF…IILM), 684-704 (ISTL…FLLI), and 775-795 (FLVL…SYGL). The segment at 860–890 (KARKPEGGEHTNKFLAERNDVPKKEEGERKE) is disordered. Basic and acidic residues predominate over residues 862–890 (RKPEGGEHTNKFLAERNDVPKKEEGERKE).

This sequence belongs to the TrbL/VirB6 family.

Its subcellular location is the cell membrane. This is an uncharacterized protein from Rickettsia felis (strain ATCC VR-1525 / URRWXCal2) (Rickettsia azadi).